A 96-amino-acid polypeptide reads, in one-letter code: Defensin-like protein 69 (96 aa).

The signal sequence occupies residues 1–19 (MGSSKLLVAFTLIVMMTIS). 4 disulfides stabilise this stretch: cysteine 37–cysteine 86, cysteine 41–cysteine 64, cysteine 50–cysteine 84, and cysteine 54–cysteine 85.

The protein belongs to the DEFL family.

It localises to the secreted. The sequence is that of Defensin-like protein 69 from Arabidopsis thaliana (Mouse-ear cress).